Here is a 347-residue protein sequence, read N- to C-terminus: Ubiquinone biosynthesis protein coq-4, mitochondrial (347 aa).

The N-terminal 49 residues, 1 to 49 (MEVTALRRSAALVARASSQNAIRPAVCAAISSTSPTPPTQIQTQQTRQF), are a transit peptide targeting the mitochondrion. The Zn(2+) site is built by histidine 185, aspartate 186, histidine 189, and glutamate 201. Positions 284-310 (IRKREREEKRRRKEMERMLSGRGTEDV) are disordered.

The protein belongs to the COQ4 family. As to quaternary structure, component of a multi-subunit COQ enzyme complex, composed of at least coq-3, coq-4, coq-5, coq-6, coq-7 and coq-9. Requires Zn(2+) as cofactor.

The protein resides in the mitochondrion inner membrane. It catalyses the reaction a 4-hydroxy-3-methoxy-5-(all-trans-polyprenyl)benzoate + H(+) = a 2-methoxy-6-(all-trans-polyprenyl)phenol + CO2. The protein operates within cofactor biosynthesis; ubiquinone biosynthesis. Its function is as follows. Lyase that catalyzes the C1-decarboxylation of 4-hydroxy-3-methoxy-5-(all-trans-polyprenyl)benzoic acid into 2-methoxy-6-(all-trans-polyprenyl)phenol during ubiquinone biosynthesis. The protein is Ubiquinone biosynthesis protein coq-4, mitochondrial of Neurospora crassa (strain ATCC 24698 / 74-OR23-1A / CBS 708.71 / DSM 1257 / FGSC 987).